The chain runs to 554 residues: MKKAWWKEAVVYQIYPRSFKDSNGDGIGDIQGIRTKLSYIKELGADVIWICPLYDSPNADNGYDIRDYQNILSEFGTMEDFDELLGDIHDLDMKLIMDLVVNHTSDEHPWFIESRSSIHSEKRDWYIWKDGKNGKTPNNWESIFGGPAWEYDQKTSQYYLHLFDKKQPDLNWENEKVRNAVYDMINWWLDKGIDGFRVDAITHIKKKEGFPDMPNPKGLDYVPSFPYHMNADGIMDLLTELKENTFSRYPIMTVGEANGVAAKEAADWAGEKNGIFSMIFQFEHLGLWDVEINESIDIVAFKRILTDWQDSLEGIGWNALFMENHDQPRSVSVWGDDGVYLKESAKALSAVYFLMKGTPFIYQGQELGMTNVAFPSIEDYDDVALKRLYETKTAKGTSHEDVMKIVWKKGRDNSRTPMQWNAGPYAGFSEAKPWIGINENYKWLNAEAQKNDKTSVYHFYKSLIKLRQTYDVFINGTYELILPEDQQIFAYLRKNESHTALIAANLTGTPALFRHSGLPLSSDALVLSNIETEPHKHMTSVLLKPYEARIYLWC.

The active-site Nucleophile is the Asp-199. Residue Glu-256 is the Proton donor of the active site.

It belongs to the glycosyl hydrolase 13 family.

It localises to the cytoplasm. It catalyses the reaction Hydrolysis of (1-&gt;6)-alpha-D-glucosidic linkages in some oligosaccharides produced from starch and glycogen by alpha-amylase, and in isomaltose.. This is Probable oligo-1,6-glucosidase 3 (yugT) from Bacillus subtilis (strain 168).